We begin with the raw amino-acid sequence, 275 residues long: Phosphonoacetaldehyde hydrolase (275 aa).

Catalysis depends on aspartate 15, which acts as the Nucleophile. Residues aspartate 15 and alanine 17 each contribute to the Mg(2+) site. Lysine 56 functions as the Schiff-base intermediate with substrate in the catalytic mechanism. Mg(2+) is bound at residue aspartate 189.

The protein belongs to the HAD-like hydrolase superfamily. PhnX family. Homodimer. Requires Mg(2+) as cofactor.

It catalyses the reaction phosphonoacetaldehyde + H2O = acetaldehyde + phosphate + H(+). Involved in phosphonate degradation. The polypeptide is Phosphonoacetaldehyde hydrolase (Pseudomonas putida (strain ATCC 700007 / DSM 6899 / JCM 31910 / BCRC 17059 / LMG 24140 / F1)).